The primary structure comprises 131 residues: Snaclec alboaggregin-A subunit alpha (131 aa).

The C-type lectin domain maps to 1–131 (DCPSDWSSYD…EYPFVCKFXR (131 aa)). 3 disulfide bridges follow: Cys-2–Cys-13, Cys-30–Cys-127, and Cys-102–Cys-119.

This sequence belongs to the snaclec family. Heterotetramer of the subunits alpha, alpha', beta and beta'; disulfide-linked. Expressed by the venom gland.

The protein resides in the secreted. Potent platelet activator that aggregates platelets via both GPIbalpha (GP1BA) and GPVI (GP6). Induces a tyrosine phosphorylation profile in platelets that resembles this produced by collagen, involving the time dependent tyrosine phosphorylation of Fc receptor gamma chain (FCGR1A), phospholipase Cgamma2 (PLCG2), and LAT. This Trimeresurus albolabris (White-lipped pit viper) protein is Snaclec alboaggregin-A subunit alpha.